A 284-amino-acid chain; its full sequence is MTAQIIDGKAIAQSIRTKLSEKVTARKEAGQRVPGLAVILVGADPASQVYVGSKRKACEEVGFISRSYDLETNCSEDELLSLIDSLNDDPTIDGILVQLPLPAHIEDSKVIERIRPDKDVDGFHPYNVGRLAQRIPVLRSCTPMGIMTLIKSTGVDTYGLDAVVVGASNIVGRPMTLELLLAGCTTTTCHRFTKNLEQKIRQADLVVVAVGKPGFIPGEWIKPGAIVIDVGINRLDNGTLVGDVQYEAAAQNASFITPVPGGVGPMTIASLLENTLYAAEQYHD.

Residues 166-168 (GAS) and Ile232 each bind NADP(+).

This sequence belongs to the tetrahydrofolate dehydrogenase/cyclohydrolase family. In terms of assembly, homodimer.

The catalysed reaction is (6R)-5,10-methylene-5,6,7,8-tetrahydrofolate + NADP(+) = (6R)-5,10-methenyltetrahydrofolate + NADPH. The enzyme catalyses (6R)-5,10-methenyltetrahydrofolate + H2O = (6R)-10-formyltetrahydrofolate + H(+). It participates in one-carbon metabolism; tetrahydrofolate interconversion. Functionally, catalyzes the oxidation of 5,10-methylenetetrahydrofolate to 5,10-methenyltetrahydrofolate and then the hydrolysis of 5,10-methenyltetrahydrofolate to 10-formyltetrahydrofolate. In Shewanella sp. (strain W3-18-1), this protein is Bifunctional protein FolD.